The sequence spans 65 residues: Large ribosomal subunit protein bL35 (65 aa).

The protein belongs to the bacterial ribosomal protein bL35 family.

The chain is Large ribosomal subunit protein bL35 from Paraburkholderia xenovorans (strain LB400).